A 271-amino-acid chain; its full sequence is MAALPINGLNVCQKLEINVPVYAGMPQPIMRQQIVADNIHGETGLDGPVFEPLTRQAESTHAVKYIIDTLMASDGDITLVPVGPLSNIAVAMRMQPAILPKIREIVLMGGAYGTGNFTPSAEFNIFADPEAARVVFTSGVPLVMMGLDLTNQTVCTPDVIARMERAGGPAGELFSDIMNFTLKTQFENYGLAGGPVHDATCIGYLINPDGIKTQDMYVEVDVNSGPCYGRTVCDELGVLGKPANTKVGITIDTDWFWGLVEECVRGYIKTH.

Positions 185 and 197 each coordinate substrate.

It belongs to the IUNH family. RihB subfamily.

The catalysed reaction is a pyrimidine ribonucleoside + H2O = a pyrimidine nucleobase + D-ribose. The protein is Putative pyrimidine-specific ribonucleoside hydrolase RihB (rihB) of Shigella dysenteriae serotype 1 (strain Sd197).